We begin with the raw amino-acid sequence, 330 residues long: Phenylalanine--tRNA ligase alpha subunit (330 aa).

Mg(2+) is bound at residue Glu-246.

This sequence belongs to the class-II aminoacyl-tRNA synthetase family. Phe-tRNA synthetase alpha subunit type 1 subfamily. Tetramer of two alpha and two beta subunits. It depends on Mg(2+) as a cofactor.

Its subcellular location is the cytoplasm. The catalysed reaction is tRNA(Phe) + L-phenylalanine + ATP = L-phenylalanyl-tRNA(Phe) + AMP + diphosphate + H(+). The polypeptide is Phenylalanine--tRNA ligase alpha subunit (Sulfurovum sp. (strain NBC37-1)).